The sequence spans 330 residues: GTPase Obg (330 aa).

The Obg domain maps to 1 to 159 (MHFIDEVKIY…MWIHLSLKLL (159 aa)). The region spanning 160–327 (SDVGLVGFPN…IVKLALETIK (168 aa)) is the OBG-type G domain. GTP-binding positions include 166–173 (GFPNAGKS), 191–195 (FTTLV), 212–215 (DIPG), 279–282 (NKCD), and 308–310 (STY). 2 residues coordinate Mg(2+): Ser173 and Thr193.

It belongs to the TRAFAC class OBG-HflX-like GTPase superfamily. OBG GTPase family. As to quaternary structure, monomer. Mg(2+) serves as cofactor.

The protein resides in the cytoplasm. Its function is as follows. An essential GTPase which binds GTP, GDP and possibly (p)ppGpp with moderate affinity, with high nucleotide exchange rates and a fairly low GTP hydrolysis rate. Plays a role in control of the cell cycle, stress response, ribosome biogenesis and in those bacteria that undergo differentiation, in morphogenesis control. The sequence is that of GTPase Obg from Rickettsia massiliae (strain Mtu5).